A 68-amino-acid polypeptide reads, in one-letter code: MASNNKEMIEEIRKQLNVVNVQLIDPDKFEDADEEKVKEIHSFVTSKDNFSPSEVTAIASELGELRQS.

The protein belongs to the UPF0435 family.

In Staphylococcus carnosus (strain TM300), this protein is UPF0435 protein Sca_1453.